The following is a 292-amino-acid chain: uncharacterized protein (292 aa).

The next 4 helical transmembrane spans lie at 17–37 (LFYT…FPAL), 135–155 (LIAV…IGQL), 166–186 (TTLW…YDIV), and 216–236 (FHGV…TALY). Positions 267–292 (EKSEDKKSIVTSRIEEENEDEISDYE) are disordered. The span at 282–292 (EENEDEISDYE) shows a compositional bias: acidic residues.

The protein resides in the membrane. This is an uncharacterized protein from Caenorhabditis elegans.